Here is a 231-residue protein sequence, read N- to C-terminus: Putative transglycosylase H16_A0665 (231 aa).

A helical membrane pass occupies residues 8 to 28; that stretch reads FIKLLVLAVIGGALLAAIAIL.

This sequence belongs to the glycosyltransferase 51 family.

Its subcellular location is the secreted. The protein localises to the membrane. It functions in the pathway cell wall biogenesis; peptidoglycan biosynthesis. Cell wall formation. This Cupriavidus necator (strain ATCC 17699 / DSM 428 / KCTC 22496 / NCIMB 10442 / H16 / Stanier 337) (Ralstonia eutropha) protein is Putative transglycosylase H16_A0665.